Consider the following 130-residue polypeptide: Large ribosomal subunit protein bL17 (130 aa).

It belongs to the bacterial ribosomal protein bL17 family. In terms of assembly, part of the 50S ribosomal subunit. Contacts protein L32.

The protein is Large ribosomal subunit protein bL17 of Shewanella loihica (strain ATCC BAA-1088 / PV-4).